Reading from the N-terminus, the 217-residue chain is NAD(P)H-quinone oxidoreductase subunit M, chloroplastic (217 aa).

Residues 1–21 (MVAAFSYTACTKLSLLHPSMV) constitute a chloroplast transit peptide. Residues 48–67 (ETETLKEEQSTEKMKKQPTP) form a disordered region. Positions 50–62 (ETLKEEQSTEKMK) are enriched in basic and acidic residues.

This sequence belongs to the NDH complex subunit M family. As to quaternary structure, part of the chloroplast NDH complex, composed of a mixture of chloroplast and nucleus encoded subunits. Component of the NDH subcomplex A, at least composed of ndhH, ndhI, ndhJ, ndhK, ndhL, ndhM, ndhN and ndhO.

The protein resides in the plastid. The protein localises to the chloroplast thylakoid membrane. It catalyses the reaction a plastoquinone + NADH + (n+1) H(+)(in) = a plastoquinol + NAD(+) + n H(+)(out). It carries out the reaction a plastoquinone + NADPH + (n+1) H(+)(in) = a plastoquinol + NADP(+) + n H(+)(out). Functionally, NDH shuttles electrons from NAD(P)H:plastoquinone, via FMN and iron-sulfur (Fe-S) centers, to quinones in the photosynthetic chain and possibly in a chloroplast respiratory chain. The immediate electron acceptor for the enzyme in this species is believed to be plastoquinone. Couples the redox reaction to proton translocation, and thus conserves the redox energy in a proton gradient. This Arabidopsis thaliana (Mouse-ear cress) protein is NAD(P)H-quinone oxidoreductase subunit M, chloroplastic.